We begin with the raw amino-acid sequence, 77 residues long: Conotoxin Vc6c (77 aa).

The first 22 residues, 1–22 (MKLTCMVIVAVLFLTANTFVTA), serve as a signal peptide directing secretion. The propeptide occupies 23–51 (DDSGNGLENLFSKAHHEIKNPEASNLNKR). Cystine bridges form between C52-C67, C59-C71, and C66-C76.

In terms of tissue distribution, expressed by the venom duct.

The protein resides in the secreted. This Conus victoriae (Queen Victoria cone) protein is Conotoxin Vc6c.